The chain runs to 353 residues: Nicotinate-nucleotide--dimethylbenzimidazole phosphoribosyltransferase (353 aa).

The active-site Proton acceptor is the Glu318.

Belongs to the CobT family.

The enzyme catalyses 5,6-dimethylbenzimidazole + nicotinate beta-D-ribonucleotide = alpha-ribazole 5'-phosphate + nicotinate + H(+). It participates in nucleoside biosynthesis; alpha-ribazole biosynthesis; alpha-ribazole from 5,6-dimethylbenzimidazole: step 1/2. Functionally, catalyzes the synthesis of alpha-ribazole-5'-phosphate from nicotinate mononucleotide (NAMN) and 5,6-dimethylbenzimidazole (DMB). This chain is Nicotinate-nucleotide--dimethylbenzimidazole phosphoribosyltransferase, found in Chloroflexus aggregans (strain MD-66 / DSM 9485).